Here is a 504-residue protein sequence, read N- to C-terminus: METFDAIQLPYPGVVGASLLVILGIILLFPLDTGHFISINQHPWDFFQTKAKQEFEYNAAALLNEGLQTGRSAFRLVTNMVTYLILKDQYAEEIKNDSRFGAHEAVDPVLLVDLPGLETMFQGSLHNQVPPMAVRALNKELVHLTPFLSEEAMNCLQTRWTDSAEWHDVSIPETVLALIAQMTTRALLGPALCRNPEWLDIAKSFTTNRAIAVAAVQSWPSFLQPVIHWFLSPCRALRRQIQCARNILLPVLERERRSYRSDQPTKREFSNLAFIDQYAKGARYDATMAQLRIIAVAFQTTSDLVEKVIARLCKHPELIQPLREEVVSVVGKNGLHSHSLRKLTLMESVMKETQRLEPAVIIGMFRLAKEKVTLKDGTVIPKGTNIAFANDLRFDPEMYPEPETFDGYRFQRMREDPEKIDLTPFTKTRMSHLAFGHGKHACPGRFLACDEAKLILCHILLKYEIRAVEGSPPELRARGMFVQLDPGAMMSVRRRRENEFALHG.

Residues 9–29 (LPYPGVVGASLLVILGIILLF) form a helical membrane-spanning segment. Cys442 lines the heme pocket.

The protein belongs to the cytochrome P450 family. Requires heme as cofactor.

The protein localises to the membrane. The catalysed reaction is fumitremorgin C + 2 reduced [NADPH--hemoprotein reductase] + 2 O2 = 12alpha,13alpha-dihydroxyfumitremorgin C + 2 oxidized [NADPH--hemoprotein reductase] + 2 H2O + 2 H(+). The protein operates within mycotoxin biosynthesis. Its function is as follows. Cytochrome P450 monooxygenase; part of the gene cluster that mediates the biosynthesis of fumitremorgins, indole alkaloids that carry not only intriguing chemical structures, but also interesting biological and pharmacological activities. The biosynthesis of fumitremorgin-type alkaloids begins by condensation of the two amino acids L-tryptophan and L-proline to brevianamide F, catalyzed by the non-ribosomal peptide synthetase ftmPS/ftmA. Brevianamide F is then prenylated by the prenyltransferase ftmPT1/ftmB in the presence of dimethylallyl diphosphate, resulting in the formation of tryprostatin B. The three cytochrome P450 monooxygenases, ftmP450-1/ftmC, ftmP450-2/ftmE and ftmP450-3/FtmG, are responsible for the conversion of tryprostatin B to 6-hydroxytryprostatin B, tryprostatin A to fumitremorgin C and fumitremorgin C to 12,13-dihydroxyfumitremorgin C, respectively. The putative methyltransferase ftmMT/ftmD is expected for the conversion of 6-hydroxytryprostatin B to tryprostatin A. FtmPT2/FtmH catalyzes the prenylation of 12,13-dihydroxyfumitre-morgin C in the presence of dimethylallyl diphosphate, resulting in the formation of fumitremorgin B. Fumitremorgin B is further converted to verruculogen by ftmOx1/ftmF via the insertion of an endoperoxide bond between the two prenyl moieties. Finally, verruculogen is further converted to fumitremorgin A by the verruculogen prenyltransferase ftmPT3. This Neosartorya fischeri (strain ATCC 1020 / DSM 3700 / CBS 544.65 / FGSC A1164 / JCM 1740 / NRRL 181 / WB 181) (Aspergillus fischerianus) protein is Fumitremorgin C monooxygenase.